The chain runs to 315 residues: L-lactate dehydrogenase (315 aa).

Residues valine 14, aspartate 35, tyrosine 67, and 81–82 (GV) contribute to the NAD(+) site. Substrate contacts are provided by residues glutamine 84, arginine 91, and 123-126 (NPVD). NAD(+) contacts are provided by residues 121-123 (ASN) and serine 146. Substrate is bound at residue 151 to 154 (DSAR). Catalysis depends on histidine 178, which acts as the Proton acceptor. Position 219 is a phosphotyrosine (tyrosine 219). Threonine 228 serves as a coordination point for substrate.

This sequence belongs to the LDH/MDH superfamily. LDH family. As to quaternary structure, homotetramer.

Its subcellular location is the cytoplasm. It catalyses the reaction (S)-lactate + NAD(+) = pyruvate + NADH + H(+). It functions in the pathway fermentation; pyruvate fermentation to lactate; (S)-lactate from pyruvate: step 1/1. Functionally, catalyzes the conversion of lactate to pyruvate. The polypeptide is L-lactate dehydrogenase (Malacoplasma penetrans (strain HF-2) (Mycoplasma penetrans)).